Consider the following 137-residue polypeptide: Basic phospholipase A2 beta-bungarotoxin A5 chain (137 aa).

The signal sequence occupies residues 1-9; it reads AVCVSLLGA. Residues 10–17 constitute a propeptide that is removed on maturation; that stretch reads ANIPPQHL. 6 disulfides stabilise this stretch: Cys44/Cys136, Cys46/Cys62, Cys61/Cys117, Cys68/Cys110, Cys78/Cys103, and Cys96/Cys108. 3 residues coordinate Ca(2+): Tyr45, Gly47, and Gly49. Residue His65 is part of the active site. Ca(2+) is bound at residue Asp66. Asp111 is a catalytic residue.

The protein belongs to the phospholipase A2 family. Group I subfamily. D49 sub-subfamily. Heterodimer; disulfide-linked. The A chains have phospholipase A2 activity and the B chains show homology with the basic protease inhibitors. Ca(2+) serves as cofactor. In terms of tissue distribution, expressed by the venom gland.

It is found in the secreted. The catalysed reaction is a 1,2-diacyl-sn-glycero-3-phosphocholine + H2O = a 1-acyl-sn-glycero-3-phosphocholine + a fatty acid + H(+). In terms of biological role, snake venom phospholipase A2 (PLA2) that inhibits neuromuscular transmission by blocking acetylcholine release from the nerve termini. PLA2 catalyzes the calcium-dependent hydrolysis of the 2-acyl groups in 3-sn-phosphoglycerides. In Bungarus multicinctus (Many-banded krait), this protein is Basic phospholipase A2 beta-bungarotoxin A5 chain.